Consider the following 122-residue polypeptide: Large ribosomal subunit protein uL14 (122 aa).

Belongs to the universal ribosomal protein uL14 family. In terms of assembly, part of the 50S ribosomal subunit. Forms a cluster with proteins L3 and L19. In the 70S ribosome, L14 and L19 interact and together make contacts with the 16S rRNA in bridges B5 and B8.

Functionally, binds to 23S rRNA. Forms part of two intersubunit bridges in the 70S ribosome. In Thioalkalivibrio sulfidiphilus (strain HL-EbGR7), this protein is Large ribosomal subunit protein uL14.